The chain runs to 71 residues: Translation initiation factor IF-1 (71 aa).

An S1-like domain is found at 1-71 (MANDVIEIEG…TKGRITYRFR (71 aa)).

This sequence belongs to the IF-1 family. As to quaternary structure, component of the 30S ribosomal translation pre-initiation complex which assembles on the 30S ribosome in the order IF-2 and IF-3, IF-1 and N-formylmethionyl-tRNA(fMet); mRNA recruitment can occur at any time during PIC assembly.

The protein localises to the cytoplasm. In terms of biological role, one of the essential components for the initiation of protein synthesis. Stabilizes the binding of IF-2 and IF-3 on the 30S subunit to which N-formylmethionyl-tRNA(fMet) subsequently binds. Helps modulate mRNA selection, yielding the 30S pre-initiation complex (PIC). Upon addition of the 50S ribosomal subunit IF-1, IF-2 and IF-3 are released leaving the mature 70S translation initiation complex. The sequence is that of Translation initiation factor IF-1 from Leuconostoc mesenteroides subsp. mesenteroides (strain ATCC 8293 / DSM 20343 / BCRC 11652 / CCM 1803 / JCM 6124 / NCDO 523 / NBRC 100496 / NCIMB 8023 / NCTC 12954 / NRRL B-1118 / 37Y).